A 388-amino-acid chain; its full sequence is Myosin light chain kinase family member 4 (388 aa).

Residues Val-106–Leu-361 form the Protein kinase domain. ATP-binding positions include Leu-112–Val-120 and Lys-135. Catalysis depends on Asp-227, which acts as the Proton acceptor.

The protein belongs to the protein kinase superfamily. CAMK Ser/Thr protein kinase family.

It catalyses the reaction L-seryl-[protein] + ATP = O-phospho-L-seryl-[protein] + ADP + H(+). The enzyme catalyses L-threonyl-[protein] + ATP = O-phospho-L-threonyl-[protein] + ADP + H(+). The sequence is that of Myosin light chain kinase family member 4 (MYLK4) from Homo sapiens (Human).